A 64-amino-acid polypeptide reads, in one-letter code: Epidermal growth factor (64 aa).

An N-terminal signal peptide occupies residues 1 to 21 (MMRHLLLVGAAILIFVSDAQA). Gln22 is modified (pyrrolidone carboxylic acid). Positions 25 to 61 (GEDPCQIVRCSYGANCIAYGDTAICECPFGYSGIRCQ) constitute an EGF-like domain. Disulfide bonds link Cys29–Cys40, Cys34–Cys49, and Cys51–Cys60.

As to expression, albumen gland. Up-regulated in adult CNS after axotomy.

The protein resides in the secreted. Functionally, induces neurite outgrowth in specific adult neurons in vitro. This Lymnaea stagnalis (Great pond snail) protein is Epidermal growth factor.